A 111-amino-acid polypeptide reads, in one-letter code: Prefoldin subunit 2 (111 aa).

Coiled coils occupy residues 1–36 (MEQRNNVFQAKYNEYKQILEELQTKIIELGHDKDEH) and 72–92 (LETKKENIEGTISKMKETLIQ).

This sequence belongs to the prefoldin subunit beta family. In terms of assembly, heterohexamer of two PFD-alpha type and four PFD-beta type subunits.

It is found in the cytoplasm. Functionally, binds specifically to cytosolic chaperonin (c-CPN) and transfers target proteins to it. Binds to nascent polypeptide chain and promotes folding in an environment in which there are many competing pathways for nonnative proteins. The protein is Prefoldin subunit 2 (GIM4) of Saccharomyces cerevisiae (strain ATCC 204508 / S288c) (Baker's yeast).